A 251-amino-acid polypeptide reads, in one-letter code: Indole-3-glycerol phosphate synthase (251 aa).

A compositionally biased stretch (polar residues) spans 1–12; the sequence is MDDSSSLASPVQ. Residues 1–27 form a disordered region; the sequence is MDDSSSLASPVQSILAAARRRDPPTRR.

This sequence belongs to the TrpC family.

It catalyses the reaction 1-(2-carboxyphenylamino)-1-deoxy-D-ribulose 5-phosphate + H(+) = (1S,2R)-1-C-(indol-3-yl)glycerol 3-phosphate + CO2 + H2O. Its pathway is amino-acid biosynthesis; L-tryptophan biosynthesis; L-tryptophan from chorismate: step 4/5. The chain is Indole-3-glycerol phosphate synthase from Halobacterium salinarum (strain ATCC 700922 / JCM 11081 / NRC-1) (Halobacterium halobium).